Reading from the N-terminus, the 411-residue chain is LL-diaminopimelate aminotransferase (411 aa).

Substrate contacts are provided by Tyr15 and Gly42. Pyridoxal 5'-phosphate contacts are provided by residues Tyr72, 108 to 109, Tyr132, Asn187, Tyr218, and 246 to 248; these read SK and SFS. The substrate site is built by Lys109, Tyr132, and Asn187. Lys249 carries the post-translational modification N6-(pyridoxal phosphate)lysine. The pyridoxal 5'-phosphate site is built by Arg257 and Asn292. Residues Asn292 and Arg388 each contribute to the substrate site.

The protein belongs to the class-I pyridoxal-phosphate-dependent aminotransferase family. LL-diaminopimelate aminotransferase subfamily. In terms of assembly, homodimer. It depends on pyridoxal 5'-phosphate as a cofactor.

The catalysed reaction is (2S,6S)-2,6-diaminopimelate + 2-oxoglutarate = (S)-2,3,4,5-tetrahydrodipicolinate + L-glutamate + H2O + H(+). Its pathway is amino-acid biosynthesis; L-lysine biosynthesis via DAP pathway; LL-2,6-diaminopimelate from (S)-tetrahydrodipicolinate (aminotransferase route): step 1/1. Its function is as follows. Involved in the synthesis of meso-diaminopimelate (m-DAP or DL-DAP), required for both lysine and peptidoglycan biosynthesis. Catalyzes the direct conversion of tetrahydrodipicolinate to LL-diaminopimelate. This chain is LL-diaminopimelate aminotransferase, found in Nostoc punctiforme (strain ATCC 29133 / PCC 73102).